The sequence spans 307 residues: GTPase Era (307 aa).

An Era-type G domain is found at 7–181 (RCGWVALMGP…VELIRKKLPK (175 aa)). A G1 region spans residues 15–22 (GPPNAGKS). 15 to 22 (GPPNAGKS) is a GTP binding site. The segment at 41 to 45 (QTTRN) is G2. The interval 62–65 (DTPG) is G3. GTP-binding positions include 62 to 66 (DTPGL) and 130 to 133 (NKVD). Residues 130–133 (NKVD) are G4. The interval 160-162 (ISA) is G5. The 79-residue stretch at 212-290 (LRQEVPYSVA…HLELWVKVRE (79 aa)) folds into the KH type-2 domain.

The protein belongs to the TRAFAC class TrmE-Era-EngA-EngB-Septin-like GTPase superfamily. Era GTPase family. In terms of assembly, monomer.

The protein localises to the cytoplasm. The protein resides in the cell inner membrane. Its function is as follows. An essential GTPase that binds both GDP and GTP, with rapid nucleotide exchange. Plays a role in 16S rRNA processing and 30S ribosomal subunit biogenesis and possibly also in cell cycle regulation and energy metabolism. The protein is GTPase Era of Desulfovibrio desulfuricans (strain ATCC 27774 / DSM 6949 / MB).